The following is a 122-amino-acid chain: MTNVPDGLKYTKTHEWYKVDNGIATVGITDYAQSQMTDIVYVDLPEVGDKKKVGDVLLTIESVKSAEDVYSPLTGEITEVNQELTKHPENINKDPYGNWLVKMKVEKEGEYLTAEQYRKLIQ.

Residues 23–104 (IATVGITDYA…PYGNWLVKMK (82 aa)) enclose the Lipoyl-binding domain. K64 is modified (N6-lipoyllysine).

This sequence belongs to the GcvH family. As to quaternary structure, the glycine cleavage system is composed of four proteins: P, T, L and H. The cofactor is (R)-lipoate.

Functionally, the glycine cleavage system catalyzes the degradation of glycine. The H protein shuttles the methylamine group of glycine from the P protein to the T protein. This Thermoplasma volcanium (strain ATCC 51530 / DSM 4299 / JCM 9571 / NBRC 15438 / GSS1) protein is Probable glycine cleavage system H protein.